The sequence spans 157 residues: Small ribosomal subunit protein uS7 (157 aa).

Belongs to the universal ribosomal protein uS7 family. In terms of assembly, part of the 30S ribosomal subunit. Contacts proteins S9 and S11.

One of the primary rRNA binding proteins, it binds directly to 16S rRNA where it nucleates assembly of the head domain of the 30S subunit. Is located at the subunit interface close to the decoding center, probably blocks exit of the E-site tRNA. The polypeptide is Small ribosomal subunit protein uS7 (Francisella philomiragia subsp. philomiragia (strain ATCC 25017 / CCUG 19701 / FSC 153 / O#319-036)).